Consider the following 1136-residue polypeptide: Pesticidal crystal protein Cry4B protoxin (1136 aa).

The segment at 84–282 is domain I; it reads TPERVWNDFM…PADKIDNTKL (199 aa). The tract at residues 283-466 is domain II; sequence SKTEFTREIY…SNRVSFAWTH (184 aa). The interval 467-641 is domain III; the sequence is KIVDPNNQIY…PITQSVLDET (175 aa).

Belongs to the delta endotoxin family. As to quaternary structure, in the presence of micelles active toxin forms oligomers that can be fit into cryo-EM maps as trimers. Binds to host (A.gambiae) cadherin AgCad1 (also called BT-R3), probably on the cell surface. Activated toxin may bind its host AgCad1 receptor as a monomer, but also forms an oligomer that is not active. It depends on Mg(2+) as a cofactor. Treatment of recombinant protein with A.aegypti 3rd instar larvae midgut extract for 1 hour yields major bands of 72 and 45 kDa, the combined proteins are toxic to mosquitoes. Longer digestion, which removes the 72 kDa protein, yields a non-toxic preparation. Proteolysis by yields a 65 kDa toxic protein and 48 and 17 kDa fragments which are not toxic. As to expression, host (A.gambiae) larval midgut; binds to host brush border membranes, probably to cadherin-AgCad1 (Cad1, also called BT-R3).

It localises to the spore. Its activity is regulated as follows. Toxic activity on Trichoplusia ni insect cells stably transfected with the AgCad1/BT-R3 receptor leads to oncosis, cell death characterized by cell swelling, membrane blebbing and depletion of energy reserves. Cell death is blocked by EDTA (but not EGTA) and is partially prevented by pretreatment with NF449 (inhibits G-s-alpha-60A and adenylyl cyclase, AC) and 2',5'-dideoxyadenosine 3'-diphosphate (ddADP, inhibits AC), while H-89 and PKAI 14-22 (both inhibit protein kinase A), ouabain (inhibits Na+/K+-ATPase) and a cell exocytosis inhibitor (Exo1) nearly completely prevent the action of the toxin in this system. The cAMP analog pCPT-cAMP and the AC activator FSK enhance toxicity. Its function is as follows. A pesticidal protein active against Aedes and Anopheles mosquito species; activity on Culex species is strain dependent. It remains toxic to permethrin-resistant strains of A.gambiae. Following activation of the protoxin by mosquito larvae midgut extract (or by chymotrypsin or trypsin treatment) it becomes insecticidal. Causes mosquito cell death by activating a host G-protein-coupled receptor which subsequently activates adenylyl cyclase and increases cAMP production. cAMP activates protein kinase A which sets off a series of downstream events which includes increased exocytosis (probably bringing more receptor to the cell membrane), Na+/K+-ATPase activation and eventual host cell death. Another group suggests that alkaline phosphatase serves as the insect receptor and that the protein forms pores in insect cell membranes. The protein is Pesticidal crystal protein Cry4B protoxin of Bacillus thuringiensis subsp. israelensis.